We begin with the raw amino-acid sequence, 376 residues long: N-acetyldiaminopimelate deacetylase (376 aa).

Residue D69 is part of the active site. The active-site Proton acceptor is the E128.

This sequence belongs to the peptidase M20A family. N-acetyldiaminopimelate deacetylase subfamily.

It catalyses the reaction N-acetyl-(2S,6S)-2,6-diaminopimelate + H2O = (2S,6S)-2,6-diaminopimelate + acetate. Its pathway is amino-acid biosynthesis; L-lysine biosynthesis via DAP pathway; LL-2,6-diaminopimelate from (S)-tetrahydrodipicolinate (acetylase route): step 3/3. Its function is as follows. Catalyzes the conversion of N-acetyl-diaminopimelate to diaminopimelate and acetate. This Streptococcus pneumoniae serotype 4 (strain ATCC BAA-334 / TIGR4) protein is N-acetyldiaminopimelate deacetylase.